The chain runs to 226 residues: UPF0111 protein PH0637 (226 aa).

This sequence belongs to the UPF0111 family.

The chain is UPF0111 protein PH0637 from Pyrococcus horikoshii (strain ATCC 700860 / DSM 12428 / JCM 9974 / NBRC 100139 / OT-3).